Here is a 178-residue protein sequence, read N- to C-terminus: uncharacterized protein (178 aa).

Residues 64–103 (GVSDNTNKTTAKDNVSDKSSENEVAQPKQVTPPVDATGNT) are disordered. Positions 73–84 (TAKDNVSDKSSE) are enriched in basic and acidic residues.

This is an uncharacterized protein from Acidianus sp. F28 (AFV-2).